Here is a 180-residue protein sequence, read N- to C-terminus: MAQGEVLEFEEIVRTRQDALLRTPPGLVPDPVDAQDLLQTALARTYGRWEGIADKRLADAYLRRVMINTRTEWWRARKLEEVPTEQLPDARVEDSTEQHADRALLMDAMKVLAPKQRSVVVLRHWEQMSTEETAAALGMSAGTVKSTLHRALARLREELETRDLDARALEREERERCAAA.

The Polymerase core binding motif lies at 36–49 (DLLQTALARTYGRW). Positions 130–149 (TEETAAALGMSAGTVKSTLH) form a DNA-binding region, H-T-H motif.

It belongs to the sigma-70 factor family. ECF subfamily.

It localises to the cytoplasm. Functionally, sigma factors are initiation factors that promote the attachment of RNA polymerase to specific initiation sites and are then released. This sigma factor is required for the synthesis of the antibiotic actinomycin. In Streptomyces antibioticus, this protein is RNA polymerase sigma-E factor (sigE).